Consider the following 366-residue polypeptide: tRNA/tmRNA (uracil-C(5))-methyltransferase (366 aa).

The S-adenosyl-L-methionine site is built by Gln190, Tyr218, Asn223, Glu239, and Asp299. Cys324 functions as the Nucleophile in the catalytic mechanism. Glu358 functions as the Proton acceptor in the catalytic mechanism.

This sequence belongs to the class I-like SAM-binding methyltransferase superfamily. RNA M5U methyltransferase family. TrmA subfamily.

The catalysed reaction is uridine(54) in tRNA + S-adenosyl-L-methionine = 5-methyluridine(54) in tRNA + S-adenosyl-L-homocysteine + H(+). It carries out the reaction uridine(341) in tmRNA + S-adenosyl-L-methionine = 5-methyluridine(341) in tmRNA + S-adenosyl-L-homocysteine + H(+). Its function is as follows. Dual-specificity methyltransferase that catalyzes the formation of 5-methyluridine at position 54 (m5U54) in all tRNAs, and that of position 341 (m5U341) in tmRNA (transfer-mRNA). This is tRNA/tmRNA (uracil-C(5))-methyltransferase from Salmonella arizonae (strain ATCC BAA-731 / CDC346-86 / RSK2980).